Consider the following 293-residue polypeptide: Light-independent protochlorophyllide reductase iron-sulfur ATP-binding protein (293 aa).

ATP-binding positions include 10–15 and Lys39; that span reads GIGKST. Ser14 lines the Mg(2+) pocket. 2 residues coordinate [4Fe-4S] cluster: Cys95 and Cys129. 180–181 serves as a coordination point for ATP; that stretch reads NR.

It belongs to the NifH/BchL/ChlL family. As to quaternary structure, homodimer. Protochlorophyllide reductase is composed of three subunits; ChlL, ChlN and ChlB. [4Fe-4S] cluster is required as a cofactor.

It localises to the plastid. Its subcellular location is the chloroplast. It carries out the reaction chlorophyllide a + oxidized 2[4Fe-4S]-[ferredoxin] + 2 ADP + 2 phosphate = protochlorophyllide a + reduced 2[4Fe-4S]-[ferredoxin] + 2 ATP + 2 H2O. Its pathway is porphyrin-containing compound metabolism; chlorophyll biosynthesis (light-independent). In terms of biological role, component of the dark-operative protochlorophyllide reductase (DPOR) that uses Mg-ATP and reduced ferredoxin to reduce ring D of protochlorophyllide (Pchlide) to form chlorophyllide a (Chlide). This reaction is light-independent. The L component serves as a unique electron donor to the NB-component of the complex, and binds Mg-ATP. This is Light-independent protochlorophyllide reductase iron-sulfur ATP-binding protein from Adiantum capillus-veneris (Maidenhair fern).